Reading from the N-terminus, the 213-residue chain is Probable nicotinate-nucleotide adenylyltransferase (213 aa).

It belongs to the NadD family.

The enzyme catalyses nicotinate beta-D-ribonucleotide + ATP + H(+) = deamido-NAD(+) + diphosphate. Its pathway is cofactor biosynthesis; NAD(+) biosynthesis; deamido-NAD(+) from nicotinate D-ribonucleotide: step 1/1. Catalyzes the reversible adenylation of nicotinate mononucleotide (NaMN) to nicotinic acid adenine dinucleotide (NaAD). The protein is Probable nicotinate-nucleotide adenylyltransferase of Citrobacter koseri (strain ATCC BAA-895 / CDC 4225-83 / SGSC4696).